The following is a 132-amino-acid chain: Histone H2A.1 (132 aa).

It belongs to the histone H2A family. As to quaternary structure, the nucleosome is a histone octamer containing two molecules each of H2A, H2B, H3 and H4 assembled in one H3-H4 heterotetramer and two H2A-H2B heterodimers. The octamer wraps approximately 147 bp of DNA.

Its subcellular location is the nucleus. The protein localises to the chromosome. Functionally, core component of nucleosome. Nucleosomes wrap and compact DNA into chromatin, limiting DNA accessibility to the cellular machineries which require DNA as a template. Histones thereby play a central role in transcription regulation, DNA repair, DNA replication and chromosomal stability. DNA accessibility is regulated via a complex set of post-translational modifications of histones, also called histone code, and nucleosome remodeling. This chain is Histone H2A.1, found in Leishmania infantum.